The following is a 132-amino-acid chain: Small ribosomal subunit protein uS8 (132 aa).

It belongs to the universal ribosomal protein uS8 family. As to quaternary structure, part of the 30S ribosomal subunit. Contacts proteins S5 and S12.

Its function is as follows. One of the primary rRNA binding proteins, it binds directly to 16S rRNA central domain where it helps coordinate assembly of the platform of the 30S subunit. This is Small ribosomal subunit protein uS8 from Bradyrhizobium sp. (strain ORS 278).